Reading from the N-terminus, the 453-residue chain is Ezy-1 protein (453 aa).

Positions 1–28 are cleaved as a signal peptide; it reads MQLSNSLRSARSAAASSGCALASRPVVA. 3 disordered regions span residues 167–187, 272–307, and 412–453; these read SDGGGDESGDRDTADAADADG, TGKAEPGAEGDDGEGEEEGEAQDVGEDAVDSSSSGG, and SAGD…SPNM. Residues 279 to 300 are compositionally biased toward acidic residues; the sequence is AEGDDGEGEEEGEAQDVGEDAV. The span at 415–425 shows a compositional bias: basic and acidic residues; the sequence is DGHEPEPKRPE.

This Chlamydomonas reinhardtii (Chlamydomonas smithii) protein is Ezy-1 protein (Ezy-1).